The sequence spans 214 residues: ATP synthase subunit 5, mitochondrial (214 aa).

Residues 1-24 (MFASRAIRMMSMRPMARTMATKAA) constitute a mitochondrion transit peptide.

As to quaternary structure, F-type ATP synthases have 2 components, the catalytic core F(1) and the membrane-embedded component F(0), linked together by a central stalk and a peripheral stalk. The central stalk, also called rotor shaft, is often seen as part of F(1). The peripheral stalk is seen as part of F(0). F(0) contains the membrane channel next to the rotor. F-type ATP synthases form dimers but each monomer functions independently in ATP generation. The dimer consists of 17 different polypeptides: ATP1 (subunit alpha, 3 molecules per monomer, part of F(1)), ATP2 (subunit beta, 3 copies per monomer, part of F(1)), ATP3 (subunit gamma, part of the central stalk), ATP4 (subunit b, part of the peripheral stalk), ATP5/OSCP (subunit 5/OSCP, part of the peripheral stalk), ATP6 (subunit a, part of the peripheral stalk), ATP7 (subunit d, part of the peripheral stalk), ATP8 (subunit 8, part of the peripheral stalk), OLI1 (subunit c, part of the rotor, 10 molecules per monomer), ATP14 (subunit h, part of the peripheral stalk), ATP15 (subunit epsilon, part of the central stalk), ATP16 (subunit delta, part of the central stalk), ATP17 (subunit f, part of the peripheral stalk), ATP18 (subunit i/j, part of the peripheral stalk), ATP19 (subunit k, dimer-specific, at interface between monomers), ATP20 (subunit g, at interface between monomers), TIM11 (subunit e, at interface between monomers).

The protein resides in the mitochondrion inner membrane. In terms of biological role, mitochondrial membrane ATP synthase (F(1)F(0) ATP synthase or Complex V) produces ATP from ADP in the presence of a proton gradient across the membrane which is generated by electron transport complexes of the respiratory chain. F-type ATP synthases consist of two structural domains, F(1) - containing the extramembraneous catalytic core, and F(0) - containing the membrane proton channel, linked together by a central stalk and a peripheral stalk. During catalysis, ATP synthesis in the catalytic domain of F(1) is coupled via a rotary mechanism of the central stalk subunits to proton translocation. Part of the complex F(0) domain and the peripheral stalk, which acts as a stator to hold the catalytic alpha/ATP1(3)beta/ATP2(3) subcomplex and subunit a/ATP6 static relative to the rotary elements. The protein is ATP synthase subunit 5, mitochondrial of Yarrowia lipolytica (strain CLIB 122 / E 150) (Yeast).